Here is a 570-residue protein sequence, read N- to C-terminus: Periplasmic trehalase (570 aa).

An N-terminal signal peptide occupies residues 1 to 34; it reads MIPPEIRRSVLLQKAIKLALAGTLLTFASFSATA. Substrate-binding positions include Arg159, 166–167, Asn203, 212–214, 284–286, and Gly317; these read WD, HSQ, and RPE. Catalysis depends on proton donor/acceptor residues Asp319 and Glu503. Glu518 contributes to the substrate binding site. Positions 544-570 are disordered; it reads KPCDSVPSTRPASLSATPTKTPSAATQ. A compositionally biased stretch (low complexity) spans 554-570; sequence PASLSATPTKTPSAATQ.

This sequence belongs to the glycosyl hydrolase 37 family. Monomer.

Its subcellular location is the periplasm. The catalysed reaction is alpha,alpha-trehalose + H2O = alpha-D-glucose + beta-D-glucose. Its function is as follows. Provides the cells with the ability to utilize trehalose at high osmolarity by splitting it into glucose molecules that can subsequently be taken up by the phosphotransferase-mediated uptake system. The polypeptide is Periplasmic trehalase (Salmonella paratyphi C (strain RKS4594)).